The following is a 190-amino-acid chain: HTH-type transcriptional repressor CutR (190 aa).

In terms of domain architecture, HTH deoR-type spans 3-58 (PINRQQHILKWLKEEGSLRISDISARFGVSEMTVYRDVNQLVQSNQVIKTAGGITL). Positions 20-39 (LRISDISARFGVSEMTVYRD) form a DNA-binding region, H-T-H motif.

It is found in the cytoplasm. May act as a negative transcriptional regulator of cutJ/ycnJ in the presence of copper. May use copper as a corepressor. The polypeptide is HTH-type transcriptional repressor CutR (Bacillus subtilis (strain 168)).